Consider the following 165-residue polypeptide: Small ribosomal subunit protein uS3m (165 aa).

The transit peptide at 1-30 (MNFLKKLLPQVATEVQQLSRSGFHTSSVCC) directs the protein to the mitochondrion.

It belongs to the universal ribosomal protein uS3 family. Component of the mitochondrial ribosome small subunit (28S) which comprises a 12S rRNA and about 30 distinct proteins.

Its subcellular location is the mitochondrion. The polypeptide is Small ribosomal subunit protein uS3m (mRpS24) (Drosophila melanogaster (Fruit fly)).